A 489-amino-acid polypeptide reads, in one-letter code: Adenylosuccinate synthetase 2, chloroplastic (489 aa).

The transit peptide at 1 to 54 (MPLASLSLDPAPFPLIRPAAGWSGRVLPVPGPAPRLCRPLRAAPVAPATTDEPS) directs the protein to the chloroplast. Residues 76 to 82 (GDEGKGK) and 104 to 106 (GHT) contribute to the GTP site. The active-site Proton acceptor is Asp-77. Residues Asp-77 and Gly-104 each contribute to the Mg(2+) site. Residues 77 to 80 (DEGK), 102 to 105 (NAGH), Thr-194, Arg-208, Gln-288, Thr-303, and Arg-367 contribute to the IMP site. His-105 acts as the Proton donor in catalysis. 363 to 369 (TTTGRPR) provides a ligand contact to substrate. GTP-binding positions include Arg-369, 395–397 (KLD), and 478–480 (GVG).

This sequence belongs to the adenylosuccinate synthetase family. Homodimer. The cofactor is Mg(2+).

It localises to the plastid. The protein localises to the chloroplast. It carries out the reaction IMP + L-aspartate + GTP = N(6)-(1,2-dicarboxyethyl)-AMP + GDP + phosphate + 2 H(+). It participates in purine metabolism; AMP biosynthesis via de novo pathway; AMP from IMP: step 1/2. Its function is as follows. Plays an important role in the de novo pathway and in the salvage pathway of purine nucleotide biosynthesis. Catalyzes the first committed step in the biosynthesis of AMP from IMP. This is Adenylosuccinate synthetase 2, chloroplastic from Sorghum bicolor (Sorghum).